The following is a 184-amino-acid chain: Shikimate kinase (184 aa).

An ATP-binding site is contributed by 17-22 (GAGKTT). Residue T21 participates in Mg(2+) binding. The substrate site is built by D39, R63, and G85. Position 123 (R123) interacts with ATP. A substrate-binding site is contributed by R142.

Belongs to the shikimate kinase family. Monomer. Mg(2+) is required as a cofactor.

It is found in the cytoplasm. It carries out the reaction shikimate + ATP = 3-phosphoshikimate + ADP + H(+). It participates in metabolic intermediate biosynthesis; chorismate biosynthesis; chorismate from D-erythrose 4-phosphate and phosphoenolpyruvate: step 5/7. Catalyzes the specific phosphorylation of the 3-hydroxyl group of shikimic acid using ATP as a cosubstrate. In Burkholderia pseudomallei (strain 1710b), this protein is Shikimate kinase.